The following is a 500-amino-acid chain: Glucose-1-phosphate adenylyltransferase large subunit, chloroplastic/amyloplastic (500 aa).

The transit peptide at 1–33 (RASPPSESRAPLRAPQRSATRQHQARQGPRRMC) directs the protein to the chloroplast. Residues 1-47 (RASPPSESRAPLRAPQRSATRQHQARQGPRRMCNGGRGPPYWTAGVT) are disordered.

The protein belongs to the bacterial/plant glucose-1-phosphate adenylyltransferase family. Heterotetramer.

The protein localises to the plastid. It is found in the chloroplast. Its subcellular location is the amyloplast. It carries out the reaction alpha-D-glucose 1-phosphate + ATP + H(+) = ADP-alpha-D-glucose + diphosphate. The protein operates within glycan biosynthesis; starch biosynthesis. With respect to regulation, insensitive to 3'phosphoglycerate and orthophosphate. Functionally, this protein plays a role in synthesis of starch. It catalyzes the synthesis of the activated glycosyl donor, ADP-glucose from Glc-1-P and ATP. This is Glucose-1-phosphate adenylyltransferase large subunit, chloroplastic/amyloplastic (AGA.7) from Triticum aestivum (Wheat).